A 583-amino-acid polypeptide reads, in one-letter code: 2-succinyl-5-enolpyruvyl-6-hydroxy-3-cyclohexene-1-carboxylate synthase (583 aa).

The protein belongs to the TPP enzyme family. MenD subfamily. As to quaternary structure, homodimer. Mg(2+) is required as a cofactor. Requires Mn(2+) as cofactor. Thiamine diphosphate serves as cofactor.

It catalyses the reaction isochorismate + 2-oxoglutarate + H(+) = 5-enolpyruvoyl-6-hydroxy-2-succinyl-cyclohex-3-ene-1-carboxylate + CO2. It participates in quinol/quinone metabolism; 1,4-dihydroxy-2-naphthoate biosynthesis; 1,4-dihydroxy-2-naphthoate from chorismate: step 2/7. Its pathway is quinol/quinone metabolism; menaquinone biosynthesis. Functionally, catalyzes the thiamine diphosphate-dependent decarboxylation of 2-oxoglutarate and the subsequent addition of the resulting succinic semialdehyde-thiamine pyrophosphate anion to isochorismate to yield 2-succinyl-5-enolpyruvyl-6-hydroxy-3-cyclohexene-1-carboxylate (SEPHCHC). This Chlorobium chlorochromatii (strain CaD3) protein is 2-succinyl-5-enolpyruvyl-6-hydroxy-3-cyclohexene-1-carboxylate synthase.